Reading from the N-terminus, the 107-residue chain is Conantokin-R (107 aa).

A signal peptide spans 1-24 (MQLYTYLYLLVSLVTFYLILGTGT). The propeptide occupies 25-80 (LGHGGALTERRSTDATALKPEPVLLQKSSARSTDDNGNDRLTQMKRILKKRGNKAR). The disordered stretch occupies residues 26–64 (GHGGALTERRSTDATALKPEPVLLQKSSARSTDDNGNDR). Glu-83, Glu-84, Glu-91, and Glu-95 each carry 4-carboxyglutamate. Glu-91 and Glu-95 together coordinate a divalent metal cation. A disulfide bridge connects residues Cys-101 and Cys-105.

The protein belongs to the conotoxin B superfamily. Ca(2+) is required as a cofactor. Requires Mg(2+) as cofactor. As to expression, expressed by the venom duct.

The protein localises to the secreted. Its function is as follows. Conantokins inhibit N-methyl-D-aspartate (NMDA) receptors. This toxin is potent in the following order of preference: NR2B approximately NR2A/GRIN2A &gt; NR2C/GRIN2C &gt;&gt; NR2D/GRIN2D. Induces sleep-like symptoms in young mice. Is a highly potent anticonvulsant compound. The chain is Conantokin-R from Conus radiatus (Rayed cone).